A 418-amino-acid polypeptide reads, in one-letter code: uncharacterized protein (418 aa).

This is an uncharacterized protein from Ictalurid herpesvirus 1 (strain Auburn) (IcHV-1).